We begin with the raw amino-acid sequence, 201 residues long: Flavin prenyltransferase UbiX (201 aa).

FMN is bound by residues 23–25 (GAS), Ser-49, 103–106 (SIKT), and Arg-138. Dimethylallyl phosphate-binding residues include Tyr-168 and Lys-184.

It belongs to the UbiX/PAD1 family.

It catalyses the reaction dimethylallyl phosphate + FMNH2 = prenylated FMNH2 + phosphate. Its function is as follows. Flavin prenyltransferase that catalyzes the synthesis of the prenylated FMN cofactor (prenyl-FMN) for 4-hydroxy-3-polyprenylbenzoic acid decarboxylase UbiD. The prenyltransferase is metal-independent and links a dimethylallyl moiety from dimethylallyl monophosphate (DMAP) to the flavin N5 and C6 atoms of FMN. This is Flavin prenyltransferase UbiX from Saccharolobus solfataricus (strain ATCC 35092 / DSM 1617 / JCM 11322 / P2) (Sulfolobus solfataricus).